The chain runs to 95 residues: Small ribosomal subunit protein bS20c (95 aa).

This sequence belongs to the bacterial ribosomal protein bS20 family.

Its subcellular location is the plastid. It localises to the chloroplast. In terms of biological role, binds directly to 16S ribosomal RNA. The polypeptide is Small ribosomal subunit protein bS20c (Pyropia yezoensis (Susabi-nori)).